The primary structure comprises 364 residues: Pre-small/secreted glycoprotein (364 aa).

Residues 1 to 32 form the signal peptide; sequence MGVTGILQLPRDRFKRTSFFLWVIILFQRTFS. An N-linked (GlcNAc...) asparagine; by host glycan is attached at Asn-40. Disulfide bonds link Cys-108–Cys-135 and Cys-121–Cys-147. Residues Asn-204, Asn-228, Asn-238, Asn-257, and Asn-268 are each glycosylated (N-linked (GlcNAc...) asparagine; by host).

The protein belongs to the filoviruses glycoprotein family. Homodimer; disulfide-linked. The homodimers are linked by two disulfide bonds in a parallel orientation. In terms of assembly, monomer. This precursor is processed into mature sGP and delta-peptide by host furin or furin-like proteases. The cleavage site corresponds to the furin optimal cleavage sequence [KR]-X-[KR]-R. Post-translationally, N-glycosylated. In terms of processing, O-glycosylated.

Its subcellular location is the secreted. Functionally, seems to possess an anti-inflammatory activity as it can reverse the barrier-decreasing effects of TNF alpha. Might therefore contribute to the lack of inflammatory reaction seen during infection in spite the of extensive necrosis and massive virus production. Does not seem to be involved in activation of primary macrophages. Does not seem to interact specifically with neutrophils. In terms of biological role, viroporin that permeabilizes mammalian cell plasma membranes. It acts by altering permeation of ionic compounds and small molecules. This activity may lead to viral enterotoxic activity. The polypeptide is Pre-small/secreted glycoprotein (GP) (Zaire ebolavirus (strain Gabon-94) (ZEBOV)).